The following is a 661-amino-acid chain: 3-hydroxypropionyl-coenzyme A synthetase (661 aa).

Asp-526 is an active-site residue. Lys-617 bears the N6-acetyllysine mark.

The protein belongs to the ATP-dependent AMP-binding enzyme family. Homotetramer.

The enzyme catalyses 3-hydroxypropanoate + ATP + CoA = 3-hydroxypropanoyl-CoA + AMP + diphosphate. Its function is as follows. Plays a role in the autotrophic CO(2) fixation pathway. Activates 3-hydroxypropionate to its CoA ester. Can also activate propionate, and to a lesser extent acrylate, acetate and butyrate. This Metallosphaera sedula (strain ATCC 51363 / DSM 5348 / JCM 9185 / NBRC 15509 / TH2) protein is 3-hydroxypropionyl-coenzyme A synthetase.